The following is a 1098-amino-acid chain: MTQCASRRKSTPSRAILGAFASARGTRWVATIAGLIGFVLSVATPLLPVVQTTAMLDWPQRGQLGSVTAPLISLTPVDFTATVPCDVVRAMPPAGGVVLGTAPKQGKDANLQALFVVVSAQRVDVTDRNVVILSVPREQVTSPQCQRIEVTSTHAGTFANFVGLKDPSGAPLRSGFPDPNLRPQIVGVFTDLTGPAPPGLAVSATIDTRFSTRPTTLKLLAIIGAIVATVVALIALWRLDQLDGRGSIAQLLLRPFRPASSPGGMRRLIPASWRTFTLTDAVVIFGFLLWHVIGANSSDDGYILGMARVADHAGYMSNYFRWFGSPEDPFGWYYNLLALMTHVSDASLWMRLPDLAAGLVCWLLLSREVLPRLGPAVAASKPAYWAAAMVLLTAWMPFNNGLRPEGIIALGSLVTYVLIERSMRYSRLTPAALAVVTAAFTLGVQPTGLIAVAALVAGGRPMLRILVRRHRLVGTLPLVSPMLAAGTVILTVVFADQTLSTVLEATRVRAKIGPSQAWYTENLRYYYLILPTVDGSLSRRFGFLITALCLFTAVFIMLRRKRIPSVARGPAWRLMGVIFGTMFFLMFTPTKWVHHFGLFAAVGAAMAALTTVLVSPSVLRWSRNRMAFLAALFFLLALCWATTNGWWYVSSYGVPFNSAMPKIDGITVSTIFFALFAIAAGYAAWLHFAPRGAGEGRLIRALTTAPVPIVAGFMAAVFVASMVAGIVRQYPTYSNGWSNVRAFVGGCGLADDVLVEPDTNAGFMKPLDGDSGSWGPLGPLGGVNPVGFTPNGVPEHTVAEAIVMKPNQPGTDYDWDAPTKLTSPGINGSTVPLPYGLDPARVPLAGTYTTGAQQQSTLVSAWYLLPKPDDGHPLVVVTAAGKIAGNSVLHGYTPGQTVVLEYAMPGPGALVPAGRMVPDDLYGEQPKAWRNLRFARAKMPADAVAVRVVAEDLSLTPEDWIAVTPPRVPDLRSLQEYVGSTQPVLLDWAVGLAFPCQQPMLHANGIAEIPKFRITPDYSAKKLDTDTWEDGTNGGLLGITDLLLRAHVMATYLSRDWARDWGSLRKFDTLVDAPPAQLELGTATRSGLWSPGKIRIGP.

The next 12 membrane-spanning stretches (helical) occupy residues 28 to 50 (WVATIAGLIGFVLSVATPLLPVV), 217 to 239 (LKLLAIIGAIVATVVALIALWRL), 271 to 293 (ASWRTFTLTDAVVIFGFLLWHVI), 402 to 419 (LRPEGIIALGSLVTYVLI), 434 to 456 (AVVTAAFTLGVQPTGLIAVAALV), 472 to 494 (LVGTLPLVSPMLAAGTVILTVVF), 541 to 558 (FGFLITALCLFTAVFIML), 570 to 587 (PAWRLMGVIFGTMFFLMF), 597 to 619 (GLFAAVGAAMAALTTVLVSPSVL), 626 to 648 (MAFLAALFFLLALCWATTNGWWY), 663 to 685 (IDGITVSTIFFALFAIAAGYAAW), and 698 to 720 (LIRALTTAPVPIVAGFMAAVFVA).

The protein belongs to the emb family.

Its subcellular location is the cell membrane. Arabinosyl transferase responsible for the polymerization of arabinose into the arabinan of arabinogalactan. In Mycobacterium bovis (strain ATCC BAA-935 / AF2122/97), this protein is Probable arabinosyltransferase B (embB).